The sequence spans 593 residues: Bifunctional purine biosynthesis protein ATIC (593 aa).

Residues 1–147 enclose the MGS-like domain; the sequence is MAARQQLALL…KNHARVTVVC (147 aa). Residues 1 to 199 form an IMP cyclohydrolase region; that stretch reads MAARQQLALL…ISDYFRKEYS (199 aa). IMP contacts are provided by residues 13–15, 35–38, 65–68, 102–103, and 126–127; these read SEK, SGGT, RVKT, CN, and DI. The active-site Proton donor/acceptor; for FAICAR cyclization activity is the lysine 138. Position 200 is an N6-acetyllysine (lysine 200). Residues 200–593 are AICAR formyltransferase; sequence KGVSQLPLRY…IHTNLRLFHH (394 aa). Residues 208–209, histidine 268, glycine 317, aspartate 340, asparagine 432, and arginine 452 each bind 5-amino-1-(5-phospho-beta-D-ribosyl)imidazole-4-carboxamide; that span reads RY. The active-site Proton acceptor; for AICAR formyltransferase activity is the histidine 268. Position 453 (isoleucine 453) interacts with (6R)-10-formyltetrahydrofolate. Phenylalanine 542 is a binding site for 5-amino-1-(5-phospho-beta-D-ribosyl)imidazole-4-carboxamide. (6R)-10-formyltetrahydrofolate-binding positions include aspartate 547 and 566–567; that span reads SA. Residue arginine 589 coordinates 5-amino-1-(5-phospho-beta-D-ribosyl)imidazole-4-carboxamide.

This sequence belongs to the PurH family. As to quaternary structure, homodimer. Associates with internalized INSR complexes on Golgi/endosomal membranes. Interacts with INSR; ATIC together with PRKAA2/AMPK2 and HACD3/PTPLAD1 is proposed to be part of a signaling network regulating INSR autophosphorylation and endocytosis.

Its subcellular location is the cytoplasm. The protein resides in the cytosol. It catalyses the reaction (6R)-10-formyltetrahydrofolate + 5-amino-1-(5-phospho-beta-D-ribosyl)imidazole-4-carboxamide = 5-formamido-1-(5-phospho-D-ribosyl)imidazole-4-carboxamide + (6S)-5,6,7,8-tetrahydrofolate. It carries out the reaction 10-formyldihydrofolate + 5-amino-1-(5-phospho-beta-D-ribosyl)imidazole-4-carboxamide = 5-formamido-1-(5-phospho-D-ribosyl)imidazole-4-carboxamide + 7,8-dihydrofolate. The catalysed reaction is IMP + H2O = 5-formamido-1-(5-phospho-D-ribosyl)imidazole-4-carboxamide. It functions in the pathway purine metabolism; IMP biosynthesis via de novo pathway; 5-formamido-1-(5-phospho-D-ribosyl)imidazole-4-carboxamide from 5-amino-1-(5-phospho-D-ribosyl)imidazole-4-carboxamide (10-formyl THF route): step 1/1. It participates in purine metabolism; IMP biosynthesis via de novo pathway; IMP from 5-formamido-1-(5-phospho-D-ribosyl)imidazole-4-carboxamide: step 1/1. AMP and XMP inhibit AICAR formyltransferase activity. AICAR formyltransferase activity is competitively inhibited by 2-[5-hydroxy-3-methyl-1-(2-methyl-4-sulfo-phenyl)-1H-pyrazol-4-ylazo]-4-sulfo-benzoic acid (326203-A). FAICAR cyclization is competitively inhibited by 1,5-dihydroimidazo[4,5-c][1,2,6]thiadiazin-4(3H)-one-2,2-dioxide and the corresponding nucleoside and nucleoside monophosphate. Functionally, bifunctional enzyme that catalyzes the last two steps of purine biosynthesis. Acts as a transformylase that incorporates a formyl group to the AMP analog AICAR (5-amino-1-(5-phospho-beta-D-ribosyl)imidazole-4-carboxamide) to produce the intermediate formyl-AICAR (FAICAR). Can use both 10-formyldihydrofolate and 10-formyltetrahydrofolate as the formyl donor in this reaction. Also catalyzes the cyclization of FAICAR to inosine monophosphate (IMP). Promotes insulin receptor/INSR autophosphorylation and is involved in INSR internalization. The protein is Bifunctional purine biosynthesis protein ATIC (ATIC) of Gallus gallus (Chicken).